The chain runs to 90 residues: DNA-directed RNA polymerase subunit omega (90 aa).

It belongs to the RNA polymerase subunit omega family. In terms of assembly, the RNAP catalytic core consists of 2 alpha, 1 beta, 1 beta' and 1 omega subunit. When a sigma factor is associated with the core the holoenzyme is formed, which can initiate transcription.

It catalyses the reaction RNA(n) + a ribonucleoside 5'-triphosphate = RNA(n+1) + diphosphate. Its function is as follows. Promotes RNA polymerase assembly. Latches the N- and C-terminal regions of the beta' subunit thereby facilitating its interaction with the beta and alpha subunits. This Beutenbergia cavernae (strain ATCC BAA-8 / DSM 12333 / CCUG 43141 / JCM 11478 / NBRC 16432 / NCIMB 13614 / HKI 0122) protein is DNA-directed RNA polymerase subunit omega.